A 391-amino-acid polypeptide reads, in one-letter code: Mannose-6-phosphate isomerase (391 aa).

Gln-97, His-99, Glu-134, and His-255 together coordinate Zn(2+). Residue Arg-274 is part of the active site.

This sequence belongs to the mannose-6-phosphate isomerase type 1 family. Requires Zn(2+) as cofactor.

Its subcellular location is the cytoplasm. It catalyses the reaction D-mannose 6-phosphate = D-fructose 6-phosphate. In terms of biological role, involved in the conversion of glucose to GDP-L-fucose, which can be converted to L-fucose, a capsular polysaccharide. The sequence is that of Mannose-6-phosphate isomerase (manA) from Salmonella typhimurium (strain LT2 / SGSC1412 / ATCC 700720).